The chain runs to 166 residues: Bacterial microcompartment shell protein EutK (166 aa).

The BMC domain maps to 4 to 88; the sequence is ALGLLEVDGM…PDDDTQWLVT (85 aa). Residues 109-165 enclose the EutK-Ctail domain; sequence ESADELLALLTSVRQGMTAGEVAAHFGWPLEKARNALEQLFSAGTLRKRSSRYRLKP.

It belongs to the bacterial microcompartments protein family. In terms of assembly, monomeric in solution.

Its subcellular location is the bacterial microcompartment. It functions in the pathway amine and polyamine degradation; ethanolamine degradation. In terms of biological role, probably a minor component of the bacterial microcompartment (BMC) shell dedicated to ethanolamine degradation. It might bind nucleic acids. This chain is Bacterial microcompartment shell protein EutK (eutK), found in Escherichia coli (strain K12).